The sequence spans 1813 residues: Sucrase-isomaltase, intestinal (1813 aa).

Residues 1–12 (MARKKSSGLKIT) are Cytoplasmic-facing. Ser7 is modified (phosphoserine; by PKA). A helical; Signal-anchor for type II membrane protein membrane pass occupies residues 13 to 32 (LIVLLAIVTIIAIALVAILP). The Lumenal portion of the chain corresponds to 33 to 1813 (TKTPAVELVS…LDEPIEISWT (1781 aa)). In terms of domain architecture, P-type 1 spans 46–95 (GKCPSAENDRLDEKINCIPDQFPTQALCAMQGCCWNPRNESPTPWCSFAN). Intrachain disulfides connect Cys48–Cys79, Cys62–Cys78, and Cys73–Cys91. Residues 95 to 991 (NNHGYEFEKI…DLELNTATAR (897 aa)) are isomaltase. N-linked (GlcNAc...) asparagine glycosylation is present at Asn127. Residues Asp250 and Asp374 each coordinate substrate. Tyr377 bears the Sulfotyrosine mark. Asn388 is a glycosylation site (N-linked (GlcNAc...) asparagine). Catalysis depends on Asp491, which acts as the Nucleophile; for isomaltase activity. Cys506 and Cys531 are disulfide-bonded. Substrate is bound at residue Arg574. Asp590 functions as the For isomaltase activity in the catalytic mechanism. Cysteines 621 and 632 form a disulfide. A substrate-binding site is contributed by His648. N-linked (GlcNAc...) asparagine glycosylation is found at Asn669, Asn791, Asn896, and Asn911. A P-type 2 domain is found at 917–962 (NQVSLDSEKIDCFPDNNPENKQNCEERGCLWEPNSAAEGPRCYFPK). The interval 992–1813 (IKMPSNPISV…LDEPIEISWT (822 aa)) is sucrase. N-linked (GlcNAc...) asparagine glycosylation is found at Asn1221 and Asn1289. A Sulfotyrosine modification is found at Tyr1294. 2 N-linked (GlcNAc...) asparagine glycosylation sites follow: Asn1326 and Asn1340. 2 positions are modified to sulfotyrosine: Tyr1368 and Tyr1371. Asp1380 acts as the Nucleophile; for sucrase activity in catalysis. Glu1383 acts as the For sucrase activity in catalysis. An N-linked (GlcNAc...) asparagine glycan is attached at Asn1432. The active-site Proton donor; for sucrase activity is Asp1486. Asn1521, Asn1545, Asn1558, Asn1703, and Asn1772 each carry an N-linked (GlcNAc...) asparagine glycan.

Belongs to the glycosyl hydrolase 31 family. In terms of assembly, the resulting sucrase and isomaltase subunits stay associated with one another in a complex by non-covalent linkages. Post-translationally, the precursor is proteolytically cleaved when exposed to pancreatic proteases in the intestinal lumen. In terms of processing, sulfated.

It localises to the apical cell membrane. It catalyses the reaction Hydrolysis of sucrose and maltose by an alpha-D-glucosidase-type action.. The catalysed reaction is Hydrolysis of (1-&gt;6)-alpha-D-glucosidic linkages in some oligosaccharides produced from starch and glycogen by alpha-amylase, and in isomaltose.. Plays an important role in the final stage of carbohydrate digestion. Isomaltase activity is specific for both alpha-1,4- and alpha-1,6-oligosaccharides. The sequence is that of Sucrase-isomaltase, intestinal (SI) from Suncus murinus (Asian house shrew).